Here is a 205-residue protein sequence, read N- to C-terminus: Proteasome subunit beta type-3 (205 aa).

Serine 2 is modified (N-acetylserine). Lysine 77 bears the N6-acetyllysine mark.

The protein belongs to the peptidase T1B family. As to quaternary structure, the 26S proteasome consists of a 20S proteasome core and two 19S regulatory subunits. The 20S proteasome core is a barrel-shaped complex made of 28 subunits that are arranged in four stacked rings. The two outer rings are each formed by seven alpha subunits, and the two inner rings are formed by seven beta subunits. The proteolytic activity is exerted by three beta-subunits PSMB5, PSMB6 and PSMB7. (Microbial infection) Interacts with HIV-1 TAT protein.

The protein localises to the cytoplasm. It localises to the nucleus. In terms of biological role, non-catalytic component of the 20S core proteasome complex involved in the proteolytic degradation of most intracellular proteins. This complex plays numerous essential roles within the cell by associating with different regulatory particles. Associated with two 19S regulatory particles, forms the 26S proteasome and thus participates in the ATP-dependent degradation of ubiquitinated proteins. The 26S proteasome plays a key role in the maintenance of protein homeostasis by removing misfolded or damaged proteins that could impair cellular functions, and by removing proteins whose functions are no longer required. Associated with the PA200 or PA28, the 20S proteasome mediates ubiquitin-independent protein degradation. This type of proteolysis is required in several pathways including spermatogenesis (20S-PA200 complex) or generation of a subset of MHC class I-presented antigenic peptides (20S-PA28 complex). This chain is Proteasome subunit beta type-3, found in Homo sapiens (Human).